The following is a 494-amino-acid chain: Probable terminase, large subunit (494 aa).

Position 26–33 (26–33) interacts with ATP; sequence ADVLFGKT. The short motif at 56–63 is the Walker A motif element; the sequence is SGHGTGKS. A Walker B motif motif is present at residues 158–163; sequence LYIIDE. Catalysis depends on E163, which acts as the For ATPase activity. Positions 293, 356, and 446 each coordinate Mg(2+).

Belongs to the punalikevirus large terminase family. In terms of assembly, interacts with pacA protein. Mg(2+) serves as cofactor.

In terms of biological role, component of the molecular motor that translocates genomic DNA in empty capsid during DNA packaging. Heterooligomerize with small terminase protein to be docked on capsid portal protein. Forms a ring-like structure through which genomic DNA is translocated into the capsid. May have or induce an endonuclease activity to cleave the genome concatemer after encapsidation. The sequence is that of Probable terminase, large subunit (pacB) from Escherichia coli (Bacteriophage P7).